Reading from the N-terminus, the 347-residue chain is Trace amine-associated receptor 4 (347 aa).

Residues 1–37 (MNSPDLWYSPETQFCFAAANNSCPRKARPALVVCAMY) lie on the Extracellular side of the membrane. An N-linked (GlcNAc...) asparagine glycan is attached at Asn20. 2 disulfides stabilise this stretch: Cys23-Cys187 and Cys106-Cys191. A helical transmembrane segment spans residues 38–58 (LVMIGAIVMTMLGNMVVIISI). Topologically, residues 59-69 (AHFKQLHSPTN) are cytoplasmic. A helical transmembrane segment spans residues 70 to 90 (FLILSMATTDFLLSCVVMPFS). Over 91-110 (MVRSIESCWYFGDLFCKVHS) the chain is Extracellular. The chain crosses the membrane as a helical span at residues 111 to 129 (CCDIMLCTTSIFHLCFISV). The Cytoplasmic segment spans residues 130–149 (DRHYAVCDPLHYVTQITVGV). A helical membrane pass occupies residues 150-170 (VGVFLLISWSVPILFAFGLVF). Residues 171-197 (SELNLIGAEDFVAAIDCTGLCVLIFNK) lie on the Extracellular side of the membrane. The extracellular Loop 2 (ECL2) stretch occupies residues 175 to 188 (LIGAEDFVAAIDCT). The chain crosses the membrane as a helical span at residues 198 to 218 (LWGVLASFIAFFLPGAIMVGI). The Cytoplasmic portion of the chain corresponds to 219-260 (YIHIFTVARKHARKIGPGPRTKRALSESKMKATSGKESKATK). The chain crosses the membrane as a helical span at residues 261 to 281 (TLSIVMGVFVLCWLPFFVLTI). At 282 to 296 (TDPFIGFTTPEDLYN) the chain is on the extracellular side. The chain crosses the membrane as a helical span at residues 297–317 (VFLWLGYFNSTFNPIIYGMFY). At 318–347 (PWFRKALRMIVTGTIFRSDSSTSSLHPAHP) the chain is on the cytoplasmic side.

This sequence belongs to the G-protein coupled receptor 1 family.

It is found in the cell membrane. Its function is as follows. Olfactory receptor specific for 2-phenylethylamine, a trace amine present at high concentration in the urine of carnivore species, playing a key role in fear and avoidance responses. 2-phenylethylamine acts as a kairomone in the chemical detection of carnivore odor and triggers fear in rats. This receptor is probably mediated by the G(s)-class of G-proteins which activate adenylate cyclase. The sequence is that of Trace amine-associated receptor 4 from Rattus norvegicus (Rat).